A 328-amino-acid chain; its full sequence is MIRPALRTDWTVEEARAIHALPFPELMHRAQTLHRAHFDPTAIETASLLSIKTGGCPEDCGYCSQSAHHDTGVKATKLMAEEEVLAAARRAKAAGAQRFCMGAAWRSPKDRDMDQLCDMVRGVADLGLETCMTLGMLSPGQVARLKAAGLDFYNHNIDTSPAYYAQIASTRTMEDRLETVEQVRRGGIKVCCGGILGMGEAEEDRIALLVTLATLPAHPDSVPVNLWNEIEGVPVQGRARAVDPFALVRIVALARILMPASVVRLSAGRTEMSDELQALCFLAGANSIFVGDQLLTTGNPAAWKDRDLLSRLGLHIAPARARPPVAAD.

Residues 41-260 (TAIETASLLS…VALARILMPA (220 aa)) enclose the Radical SAM core domain. The [4Fe-4S] cluster site is built by C56, C60, and C63. C100, C131, C191, and R264 together coordinate [2Fe-2S] cluster.

The protein belongs to the radical SAM superfamily. Biotin synthase family. In terms of assembly, homodimer. It depends on [4Fe-4S] cluster as a cofactor. [2Fe-2S] cluster is required as a cofactor.

It carries out the reaction (4R,5S)-dethiobiotin + (sulfur carrier)-SH + 2 reduced [2Fe-2S]-[ferredoxin] + 2 S-adenosyl-L-methionine = (sulfur carrier)-H + biotin + 2 5'-deoxyadenosine + 2 L-methionine + 2 oxidized [2Fe-2S]-[ferredoxin]. The protein operates within cofactor biosynthesis; biotin biosynthesis; biotin from 7,8-diaminononanoate: step 2/2. Catalyzes the conversion of dethiobiotin (DTB) to biotin by the insertion of a sulfur atom into dethiobiotin via a radical-based mechanism. This chain is Biotin synthase, found in Cereibacter sphaeroides (strain ATCC 17029 / ATH 2.4.9) (Rhodobacter sphaeroides).